The chain runs to 159 residues: Abscisic acid and environmental stress-inducible protein (159 aa).

6 consecutive repeat copies span residues 38–49 (GGGYNHGGGGYN), 50–61 (GGGYNHGGGGYN), 63–74 (GGGYNHGGGGYN), 77–88 (GGGYNHGGGGYN), 91–102 (GGGYNHGGGGYN), and 105–116 (GGGYNHGGGGYN). A 7 X 12 AA repeats of G-G-G-Y-N-H-G-G-G-Y-N region spans residues 38 to 135 (GGGYNHGGGG…GYNHGGGGCQ (98 aa)). The 7; approximate repeat unit spans residues 124-135 (GGGYNHGGGGCQ).

This sequence belongs to the GRP family.

The sequence is that of Abscisic acid and environmental stress-inducible protein from Medicago sativa subsp. falcata (Sickle medic).